The following is a 318-amino-acid chain: Ankyrin repeat and SOCS box protein 7 (318 aa).

7 ANK repeats span residues 13-42, 46-75, 80-109, 116-145, 149-178, 180-208, and 213-242; these read QEEL…SPNG, NGWT…DPTV, GGFT…RSDI, DGWT…EVDP, KGTT…NIDI, NGFL…DTNL, and DGQT…DTNT. Residues 265 to 318 form the SOCS box domain; it reads LDFLQEVTRQPRNLQDLCRIKIRQCIGLQNLKLLDELPIAKVMKDYLKHKFDDI.

This sequence belongs to the ankyrin SOCS box (ASB) family. Interacts with CUL5. Interacts with RNF7. Interacts with PSRC1.

Its pathway is protein modification; protein ubiquitination. Functionally, probable substrate-recognition component of a SCF-like ECS (Elongin-Cullin-SOCS-box protein) E3 ubiquitin-protein ligase complex which mediates the ubiquitination and subsequent proteasomal degradation of target proteins. Plays a role in spindle dynamics and genome integrity by targeting the mitotic progression protein PSRC1 for proteasomal degradation in a cell cycle-dependent manner. Also participates in meiosis by mediating the proper attachment between kinetochores and microtubules. In Homo sapiens (Human), this protein is Ankyrin repeat and SOCS box protein 7 (ASB7).